The primary structure comprises 201 residues: Adenylyl-sulfate kinase (201 aa).

Residue 35–42 (GLSGSGKS) coordinates ATP. Ser109 serves as the catalytic Phosphoserine intermediate.

This sequence belongs to the APS kinase family.

It carries out the reaction adenosine 5'-phosphosulfate + ATP = 3'-phosphoadenylyl sulfate + ADP + H(+). Its pathway is sulfur metabolism; hydrogen sulfide biosynthesis; sulfite from sulfate: step 2/3. In terms of biological role, catalyzes the synthesis of activated sulfate. This is Adenylyl-sulfate kinase from Escherichia coli (strain ATCC 8739 / DSM 1576 / NBRC 3972 / NCIMB 8545 / WDCM 00012 / Crooks).